We begin with the raw amino-acid sequence, 479 residues long: Glycine betaine methyltransferase (479 aa).

Belongs to the trimethylamine methyltransferase family.

It carries out the reaction Co(I)-[glycine betaine-specific corrinoid protein] + glycine betaine + H(+) = methyl-Co(III)-[glycine betaine-specific corrinoid protein] + N,N-dimethylglycine. In terms of biological role, methyltransferase able to methylate free cob(I)alamin in vitro, using glycine betaine as the methyl donor, yealding methylcobalamin (methylCbl) and dimethylglycine. In vivo, probably carries out the methylation of a corrinoid protein, likely the adjacently encoded DSY3155, with glycine betaine, to then supply methyl groups to tetrahydrofolate (THF) for ultimate conversion to carbon dioxide; oxidation of the methyl group would also provide reducing equivalents for anaerobic respiration. Thus, may function in the pathway that allows anaerobic methylotrophic growth of D.hafniense using glycine betaine. Cannot use quaternary amines such as carnitine and choline as substrates, nor tertiary amines such as dimethylglycine or trimethylamine. The protein is Glycine betaine methyltransferase of Desulfitobacterium hafniense (strain Y51).